The sequence spans 283 residues: Ribonuclease P protein subunit p38 (283 aa).

Alanine 2 is subject to N-acetylalanine. Residues serine 12, serine 226, and serine 235 each carry the phosphoserine modification.

Belongs to the eukaryotic ribosomal protein eL8 family. As to quaternary structure, component of nuclear RNase P and RNase MRP ribonucleoproteins. RNase P consists of a catalytic RNA moiety and about 10 protein subunits; POP1, POP4, POP5, POP7, RPP14, RPP21, RPP25, RPP30, RPP38 and RPP40. Within the RNase P complex, POP1, POP7 and RPP25 form the 'finger' subcomplex, POP5, RPP14, RPP40 and homodimeric RPP30 form the 'palm' subcomplex, and RPP21, POP4 and RPP38 form the 'wrist' subcomplex. All subunits of the RNase P complex interact with the catalytic RNA. Several subunits of RNase P are also part of the RNase MRP complex. RNase MRP consists of a catalytic RNA moiety and about 8 protein subunits; POP1, POP7, RPP25, RPP30, RPP38, RPP40 and possibly also POP4 and POP5.

The protein localises to the nucleus. The protein resides in the nucleolus. Functionally, component of ribonuclease P, a ribonucleoprotein complex that generates mature tRNA molecules by cleaving their 5'-ends. Also a component of the MRP ribonuclease complex, which cleaves pre-rRNA sequences. The chain is Ribonuclease P protein subunit p38 (RPP38) from Homo sapiens (Human).